Here is a 1088-residue protein sequence, read N- to C-terminus: V-type proton ATPase catalytic subunit A (1088 aa).

257-264 serves as a coordination point for ATP; the sequence is GAFGCGKT. Positions 485 to 662 constitute a DOD-type homing endonuclease domain; that stretch reads LLGTWAGIGN…LVKIAHSLGI (178 aa).

It belongs to the ATPase alpha/beta chains family. As to quaternary structure, V-ATPase is a heteromultimeric enzyme composed of a peripheral catalytic V1 complex (components A to H) attached to an integral membrane V0 proton pore complex (components: a, c, c', c'', d, e, f and VOA1). This protein undergoes a protein self splicing that involves a post-translational excision of the VDE intervening region (intein) followed by peptide ligation.

The protein resides in the vacuole membrane. The enzyme catalyses ATP + H2O + 4 H(+)(in) = ADP + phosphate + 5 H(+)(out). Functionally, catalytic subunit of the V1 complex of vacuolar(H+)-ATPase (V-ATPase), a multisubunit enzyme composed of a peripheral complex (V1) that hydrolyzes ATP and a membrane integral complex (V0) that translocates protons. V-ATPase is responsible for acidifying and maintaining the pH of intracellular compartments. Its function is as follows. VDE is an endonuclease that can cleave at a site present in a VMA1 allele that lacks the derived endonuclease segment of the open reading frame; cleavage at this site only occurs during meiosis and initiates 'homing', a genetic event that converts a VMA1 allele lacking VDE into one that contains it. This is V-type proton ATPase catalytic subunit A (VMA1) from Candida tropicalis (Yeast).